The chain runs to 536 residues: MACSWTFLWLLWIALVAVLLFALRGPLKISESLESVTATSYFNNLTPKFYVALTGTSSLVSGIILIFEWWYFKNNAGIDAGDEEGSDNDESIENTKTVPECKVWRNPMALFRAAEYNRFRKETNSEPLTYYDMNLSAQDHQSLFMCDEDQGRAEYEIMQVAWRERESEERIQTARAALAINPECASALVLLAEEESETVSQAENLLRRALRAIESTLNSYSNNQIASYAQNGDAVRKRDLTIQTYIKRRLAMCARKQGRLREAIKGFRDLSRDQSLSTLLSVQDNLIEACLEVQAYADVQNLLVRYDGYGAPCSYELREPRSAAMSYTSALLKVRAVAENFRCAADSSIRRGLSSAEQTAIEALTRAMEFNPHVPPYLLELRSMIMPPEHFLKRGDSEALAYAFFHIQHWKRIDGALQLLSIVWKDFVPKVSKDKNAFSSQLESADKELLPSWHEQSVFPKTEGTLMMLLQTFICLAICILAVLAQQFPASSGEIFRTAATIGMQFYENSVYTVSQWAPGNIIPYLASKQVPVPEL.

2 helical membrane-spanning segments follow: residues 3-23 and 49-69; these read CSWT…LFAL and FYVA…IFEW. Positions 191-218 form a coiled coil; the sequence is LAEEESETVSQAENLLRRALRAIESTLN. The chain crosses the membrane as a helical span at residues 465-485; the sequence is TLMMLLQTFICLAICILAVLA.

Belongs to the ST7 family.

The protein resides in the membrane. This is Protein ST7 homolog from Caenorhabditis elegans.